We begin with the raw amino-acid sequence, 416 residues long: Gamma-glutamyl phosphate reductase (416 aa).

The protein belongs to the gamma-glutamyl phosphate reductase family.

The protein localises to the cytoplasm. It catalyses the reaction L-glutamate 5-semialdehyde + phosphate + NADP(+) = L-glutamyl 5-phosphate + NADPH + H(+). The protein operates within amino-acid biosynthesis; L-proline biosynthesis; L-glutamate 5-semialdehyde from L-glutamate: step 2/2. In terms of biological role, catalyzes the NADPH-dependent reduction of L-glutamate 5-phosphate into L-glutamate 5-semialdehyde and phosphate. The product spontaneously undergoes cyclization to form 1-pyrroline-5-carboxylate. The sequence is that of Gamma-glutamyl phosphate reductase from Streptococcus pyogenes serotype M1.